Reading from the N-terminus, the 78-residue chain is Major outer membrane lipoprotein Lpp (78 aa).

Positions 1-19 are cleaved as a signal peptide; sequence MKAKIVLGAVILASGLLAG. C20 carries the N-palmitoyl cysteine lipid modification. Residue C20 is the site of S-diacylglycerol cysteine attachment. 2 repeats span residues 25 to 35 and 39 to 49; these read NAQLDQISSDV and NTQVQQLSSDV. Residues 28-62 adopt a coiled-coil conformation; that stretch reads LDQISSDVNRLNTQVQQLSSDVQSANAQAKAAYEA. At K78 the chain carries N6-murein peptidoglycan lysine.

The protein belongs to the Lpp family. Homotrimer.

The protein localises to the cell outer membrane. Its subcellular location is the secreted. The protein resides in the cell wall. A highly abundant outer membrane lipoprotein that controls the distance between the inner and outer membranes. The only protein known to be covalently linked to the peptidoglycan network (PGN). Also non-covalently binds the PGN. The link between the cell outer membrane and PGN contributes to maintenance of the structural and functional integrity of the cell envelope, and maintains the correct distance between the PGN and the outer membrane. In Proteus mirabilis, this protein is Major outer membrane lipoprotein Lpp.